The following is a 204-amino-acid chain: Dephospho-CoA kinase (204 aa).

One can recognise a DPCK domain in the interval 12 to 204 (RIGVTGGIAS…AWRDQISSIC (193 aa)). ATP is bound at residue 20–25 (ASGKSS).

The protein belongs to the CoaE family.

The protein resides in the cytoplasm. The enzyme catalyses 3'-dephospho-CoA + ATP = ADP + CoA + H(+). It functions in the pathway cofactor biosynthesis; coenzyme A biosynthesis; CoA from (R)-pantothenate: step 5/5. Functionally, catalyzes the phosphorylation of the 3'-hydroxyl group of dephosphocoenzyme A to form coenzyme A. This Prochlorococcus marinus (strain MIT 9313) protein is Dephospho-CoA kinase.